The chain runs to 350 residues: DNA-directed RNA polymerase subunit alpha (350 aa).

Residues 1 to 226 (MLISQRPTLS…ELFGLARELN (226 aa)) are alpha N-terminal domain (alpha-NTD). An alpha C-terminal domain (alpha-CTD) region spans residues 241-350 (ADQAAHFALP…NQDYAETEQL (110 aa)). A disordered region spans residues 328–350 (GTWNSDAGYDLEDNQDYAETEQL). A compositionally biased stretch (acidic residues) spans 336-350 (YDLEDNQDYAETEQL).

The protein belongs to the RNA polymerase alpha chain family. As to quaternary structure, homodimer. The RNAP catalytic core consists of 2 alpha, 1 beta, 1 beta' and 1 omega subunit. When a sigma factor is associated with the core the holoenzyme is formed, which can initiate transcription.

The catalysed reaction is RNA(n) + a ribonucleoside 5'-triphosphate = RNA(n+1) + diphosphate. In terms of biological role, DNA-dependent RNA polymerase catalyzes the transcription of DNA into RNA using the four ribonucleoside triphosphates as substrates. The polypeptide is DNA-directed RNA polymerase subunit alpha (Mycolicibacterium vanbaalenii (strain DSM 7251 / JCM 13017 / BCRC 16820 / KCTC 9966 / NRRL B-24157 / PYR-1) (Mycobacterium vanbaalenii)).